Here is a 129-residue protein sequence, read N- to C-terminus: Small ribosomal subunit protein uS11 (129 aa).

It belongs to the universal ribosomal protein uS11 family. Part of the 30S ribosomal subunit. Interacts with proteins S7 and S18. Binds to IF-3.

In terms of biological role, located on the platform of the 30S subunit, it bridges several disparate RNA helices of the 16S rRNA. Forms part of the Shine-Dalgarno cleft in the 70S ribosome. This is Small ribosomal subunit protein uS11 from Maricaulis maris (strain MCS10) (Caulobacter maris).